Reading from the N-terminus, the 143-residue chain is Ribonuclease VapC33 (143 aa).

Residues Asp5 and Asp108 each contribute to the Mg(2+) site.

Belongs to the PINc/VapC protein family. The cofactor is Mg(2+).

Toxic component of a type II toxin-antitoxin (TA) system. An RNase. Its toxic effect is neutralized by coexpression with cognate antitoxin VapB33. The sequence is that of Ribonuclease VapC33 from Mycobacterium tuberculosis (strain CDC 1551 / Oshkosh).